A 181-amino-acid chain; its full sequence is Oligoribonuclease (181 aa).

Residues 8-171 enclose the Exonuclease domain; the sequence is LVWIDMEMTG…DDIRESIAEL (164 aa). Tyrosine 129 is an active-site residue.

It belongs to the oligoribonuclease family.

The protein resides in the cytoplasm. Functionally, 3'-to-5' exoribonuclease specific for small oligoribonucleotides. This Aeromonas hydrophila subsp. hydrophila (strain ATCC 7966 / DSM 30187 / BCRC 13018 / CCUG 14551 / JCM 1027 / KCTC 2358 / NCIMB 9240 / NCTC 8049) protein is Oligoribonuclease.